The primary structure comprises 205 residues: 3-demethoxyubiquinol 3-hydroxylase (205 aa).

Fe cation is bound by residues E54, E84, H87, E136, E168, and H171.

It belongs to the COQ7 family. It depends on Fe cation as a cofactor.

It localises to the cell membrane. The enzyme catalyses a 5-methoxy-2-methyl-3-(all-trans-polyprenyl)benzene-1,4-diol + AH2 + O2 = a 3-demethylubiquinol + A + H2O. It functions in the pathway cofactor biosynthesis; ubiquinone biosynthesis. Catalyzes the hydroxylation of 2-nonaprenyl-3-methyl-6-methoxy-1,4-benzoquinol during ubiquinone biosynthesis. The protein is 3-demethoxyubiquinol 3-hydroxylase of Delftia acidovorans (strain DSM 14801 / SPH-1).